Consider the following 1378-residue polypeptide: MNIGDDKSEVDVIIDSSSITLNNNESSNNNTNIGDVLKFESGLYNSFECELINQVFNSVPIMMGVCDLYDNSNSDFQIQDSQNYDFKFVISNRCSYDNLHMFLDKGKGLDGHYSAKELHLPAYFITLWIENMLRSLRKKKSVKFMYPRYVDNGETPSSDDFYSQKIVWKKSTMCFMGQVLVPLDDINSNSNNNSNQKQTACRFFFTSEEVTKEKFKKEELINDFKSRLETLENKIDQRVDERIETRFKYVLESIPQMVWVTDNHGKIEFVNRQWKDYLGIDHSGQYLNWGSISYQQHNNNNNNNNNNNNNNNNNNNNNSNNKSPIINSPNTTSPTNTQIDFDSQWHYSLKEMKRFEMEILLQSMSGEYRWFLVRAEPYIEPNLGHPSSPLPSIISACVDNCDIMTDDNSSGILINNNNNIQQPYLNNDNISGDNVNNTPTCIDNNNNNIDGSNNSVNSTGTEQLDIKWIGTCTDVNDQKTAQDRIENAEKSKALFLQTMSHEMRTPLAGIMGINSWLSTSSPQLTSEQLDGCHTIDMCAEALLVLINNILDLSKLEENKIILEETEFYPTKIVEDSVDILSSQAEQKKLDIIFQLKYNCLSKVVGDFYRIRQVLTNLISNSVKFTPANGQIIVGCEIYHETTPSTRKRSSLDSIEITIPCNHNNSNNSNNNHNHNNNNNNNNHLNCSGSFNNNGFNHGHHHHHHHHHHHHHHHDKHCDQKIIVPGKYGKLLFWVIDNGIGIPEEGREKLFQTFSQYDASTTRKYGGSGLGLAISKRLTQLLGGDIWFESQKGKGSSFHFLVEVFFPDYPTIYNQQLQQQQQQPNLPHQFNIGTSAPQPIDSILTSYSSNNSNNNINNNNITTSVISQSPIVDKSNLCTYIFLLSTNQVLVNSLSQWINEWIGNATNNNNSNNDNNNNNTTSTTTTTTTTTATINTNINQQVKILYDIDSIEQISNSAIQSGKRLDFLFLIEDTFWNNYSDKISNSQEIIESLINQNYQQQQQQQQEQRQQHNIKNVILSFSNSAQIYGNSIILKKPIKYSPLKDCIYTNLLYFKSIYSVNSFDVIIATQMSSSVSPSSLSSSPSIQGLTNSSLSINNINISGNNSNNNINNNNNNSGSSTPKKLKKSNSDQSIHFSPSLTSSSLPSLDLNNNNNINNNNNINNNNNINNNNNNNNNNNNNNNNNNNNLNHYNSDSILSSDLSPQQHQYHHPNPLLANYQKKRRNSVVNDTDIPLEMTGIRYPLKIMVAEDSLVNQKVACRFLTKLGYKKEEIIFVVNGQQAIDHIENVEMVDVILMDMQMPEVDGCEATTRIRMRYPTTGPHIIGLTANAFNEDKDKCLLSGMCHYLAKPVKMDILAVELKRAWLIRNKFRVCLCAVL.

A coiled-coil region spans residues K212–R242. The PAS domain maps to I243 to N314. The interval Y294–T337 is disordered. Residues N298–T337 are compositionally biased toward low complexity. Residues T498 to F805 enclose the Histidine kinase domain. H501 bears the Phosphohistidine; by autocatalysis mark. The span at N663–N696 shows a compositional bias: low complexity. Disordered stretches follow at residues N663–C717, T905–T924, and N1103–P1213. Residues H697–D714 show a composition bias toward basic residues. 2 stretches are compositionally biased toward low complexity: residues N1103–S1119 and S1136–N1187. Over residues L1188–H1206 the composition is skewed to polar residues. Positions K1244–W1364 constitute a Response regulatory domain. 4-aspartylphosphate is present on D1297.

Activation probably requires transfer of a phosphate group between a histidine in the kinase core (transmitter) domain and an aspartate of the receiver domain.

The enzyme catalyses ATP + protein L-histidine = ADP + protein N-phospho-L-histidine.. In terms of biological role, acts as a receptor histidine kinase for a signal transduction pathway. This protein undergoes an ATP-dependent autophosphorylation at a conserved histidine residue in the kinase core, and a phosphoryl group is then transferred to a conserved aspartate residue in the receiver domain. The chain is Hybrid signal transduction histidine kinase H (dhkH) from Dictyostelium discoideum (Social amoeba).